A 298-amino-acid chain; its full sequence is Flavin-dependent thymidylate synthase (298 aa).

The region spanning 41 to 251 (GFVRLVDYMG…PLTYAAFVEY (211 aa)) is the ThyX domain. Residues T87, 110-112 (RHR), and E118 contribute to the FAD site. DUMP is bound by residues 107 to 110 (QWVR), 118 to 122 (EYSAR), and R190. Positions 110-120 (RHRTANVNEYS) match the ThyX motif motif. Residues 206–208 (DLH) and H212 contribute to the FAD site. Residue R217 participates in dUMP binding. The Involved in ionization of N3 of dUMP, leading to its activation role is filled by R217.

This sequence belongs to the thymidylate synthase ThyX family. Homotetramer. It depends on FAD as a cofactor.

It catalyses the reaction dUMP + (6R)-5,10-methylene-5,6,7,8-tetrahydrofolate + NADPH + H(+) = dTMP + (6S)-5,6,7,8-tetrahydrofolate + NADP(+). It functions in the pathway pyrimidine metabolism; dTTP biosynthesis. Its function is as follows. Catalyzes the reductive methylation of 2'-deoxyuridine-5'-monophosphate (dUMP) to 2'-deoxythymidine-5'-monophosphate (dTMP) while utilizing 5,10-methylenetetrahydrofolate (mTHF) as the methyl donor, and NADPH and FADH(2) as the reductant. This Ehrlichia ruminantium (strain Welgevonden) protein is Flavin-dependent thymidylate synthase.